The primary structure comprises 284 residues: MPRYAQLVMGPAGSGKSTYCSTMVQHCEALNRSVQVVNLDPAAEHFNYPVMADIRELIEVDDVMEDESLRFGPNGGLVFCMEYFANNFDWLENCLGHVEDDYILFDCPGQIELYTHLPVMKQLVQQLEQWEFRVCGVFLVDSQFMVESFKFISGILAALSAMVSLEIPQVNIMTKMDLLSKKAKKEIEKFLDPDMYSLIDDSTGDLRSQKFKKLTKAVCGLVDDYSMVRFLPYDQSDEESMNIVLQHIDFAIQYGEDLEFKEPREHEEESSSMFDEYFQERQNE.

GTP is bound at residue 13–18; that stretch reads GSGKST. The Gly-Pro-Asn (GPN)-loop; involved in dimer interface signature appears at 72–74; the sequence is GPN. 174 to 177 provides a ligand contact to GTP; sequence TKMD. Positions 262–284 are disordered; the sequence is EPREHEEESSSMFDEYFQERQNE.

The protein belongs to the GPN-loop GTPase family. Heterodimer with GPN1. Binds to RNA polymerase II (RNAPII). Interacts directly with subunits RPB4 and RPB7 and the CTD of RPB1.

Functionally, small GTPase required for proper localization of RNA polymerase II (RNAPII). May act at an RNAP assembly step prior to nuclear import. This chain is GPN-loop GTPase 3, found in Mus musculus (Mouse).